The primary structure comprises 200 residues: Recombination protein RecR (200 aa).

The segment at 58–75 (CSNCFCLKISQTSPCNFC) adopts a C4-type zinc-finger fold. One can recognise a Toprim domain in the interval 82 to 177 (SSLCIVATPK…KISRLALGMP (96 aa)).

It belongs to the RecR family.

Functionally, may play a role in DNA repair. It seems to be involved in an RecBC-independent recombinational process of DNA repair. It may act with RecF and RecO. This Chlamydia trachomatis serovar D (strain ATCC VR-885 / DSM 19411 / UW-3/Cx) protein is Recombination protein RecR.